The primary structure comprises 874 residues: Leucine--tRNA ligase (874 aa).

The 'HIGH' region signature appears at 43-53 (PYPSGRIHIGH). The 'KMSKS' region signature appears at 630-634 (KMSKS). K633 provides a ligand contact to ATP.

Belongs to the class-I aminoacyl-tRNA synthetase family.

It is found in the cytoplasm. It carries out the reaction tRNA(Leu) + L-leucine + ATP = L-leucyl-tRNA(Leu) + AMP + diphosphate. The protein is Leucine--tRNA ligase of Bradyrhizobium diazoefficiens (strain JCM 10833 / BCRC 13528 / IAM 13628 / NBRC 14792 / USDA 110).